Reading from the N-terminus, the 296-residue chain is GTPase Era (296 aa).

Residues 3-170 form the Era-type G domain; it reads KSGFITIVGR…LELMVKYLPE (168 aa). The tract at residues 11–18 is G1; it reads GRPNVGKS. Residue 11–18 coordinates GTP; sequence GRPNVGKS. Residues 37-41 are G2; it reads QTTRN. A G3 region spans residues 58–61; sequence DTPG. Residues 58–62 and 120–123 contribute to the GTP site; these read DTPGI and NKVD. Positions 120–123 are G4; sequence NKVD. Residues 149 to 151 form a G5 region; that stretch reads ISA. Residues 201 to 278 enclose the KH type-2 domain; that stretch reads LSQEVPHGIA…NIKIWVKVRK (78 aa).

Belongs to the TRAFAC class TrmE-Era-EngA-EngB-Septin-like GTPase superfamily. Era GTPase family. As to quaternary structure, monomer.

The protein localises to the cytoplasm. Its subcellular location is the cell membrane. Its function is as follows. An essential GTPase that binds both GDP and GTP, with rapid nucleotide exchange. Plays a role in 16S rRNA processing and 30S ribosomal subunit biogenesis and possibly also in cell cycle regulation and energy metabolism. This is GTPase Era from Clostridium perfringens (strain 13 / Type A).